A 474-amino-acid polypeptide reads, in one-letter code: Sporulation-specific protein 6 (474 aa).

Residues 125–178 (RLAFPNFIFYFDNVDEEIKRRVTQKINNLGAKVATLFTFEVTHFITTRTTDPEM) enclose the BRCT domain. The segment at 421-470 (IETKSGYCENCCERYKDLERHLGGKHHRRFAEKDENFQGLDDLFLLIRRP) adopts a DBF4-type zinc-finger fold. Zn(2+) is bound by residues C428, C431, H441, and H447.

It localises to the nucleus. Its function is as follows. May act as a kinase regulator. Essential for progression of meiosis II and sporulation. This Schizosaccharomyces pombe (strain 972 / ATCC 24843) (Fission yeast) protein is Sporulation-specific protein 6 (spo6).